The chain runs to 131 residues: Small ribosomal subunit protein uS8 (131 aa).

This sequence belongs to the universal ribosomal protein uS8 family. As to quaternary structure, part of the 30S ribosomal subunit. Contacts proteins S5 and S12.

In terms of biological role, one of the primary rRNA binding proteins, it binds directly to 16S rRNA central domain where it helps coordinate assembly of the platform of the 30S subunit. The polypeptide is Small ribosomal subunit protein uS8 (Sulfurovum sp. (strain NBC37-1)).